The sequence spans 729 residues: Anti-bacteriophage protein B (729 aa).

One can recognise a Helicase ATP-binding domain in the interval 109–271; that stretch reads FDLLKSGQNV…KLGYPHTFVS (163 aa). Residue 122 to 129 coordinates ATP; the sequence is APTSMGKS. One can recognise a Helicase C-terminal domain in the interval 297-472; it reads ALGEIAHACV…GIDTPINLLA (176 aa).

This sequence belongs to the helicase family. In terms of assembly, interacts with AbpB.

Its function is as follows. Part of an antiviral system composed of AbpA and AbpB; when both are expressed from a plasmid they confer resistance to phages T2, T4, T7 and lambda but not RB32 or RB69. Resistance is temperature dependent, it can be seen at 30 degrees Celsius but not at 37 or 42 degrees Celsius. The system impairs phage but not bacterial DNA synthesis (shown for T4, T7 and lambda). Partially suppressed by mutations in T4 gene 41, a replicative helicase. Deletion or mutations in this gene were selected in directed evolution experiments for resistance to intense ionizing radiation (3000 Gy). This Escherichia coli (strain K12) protein is Anti-bacteriophage protein B.